The following is a 363-amino-acid chain: Glutamate--cysteine ligase (363 aa).

It belongs to the glutamate--cysteine ligase type 2 family. YbdK subfamily.

The catalysed reaction is L-cysteine + L-glutamate + ATP = gamma-L-glutamyl-L-cysteine + ADP + phosphate + H(+). Functionally, catalyzes the synthesis of gamma-glutamylcysteine (gamma-GC), the main low-molecular-weight thiol compound instead of glutathione in halophilic archaea. This is Glutamate--cysteine ligase from Haloquadratum walsbyi (strain DSM 16790 / HBSQ001).